Reading from the N-terminus, the 214-residue chain is cAMP-activated global transcriptional regulator Vfr (214 aa).

3',5'-cyclic AMP contacts are provided by residues 59 to 60 (RE), 73 to 75 (GEL), 87 to 88 (RS), 132 to 133 (TT), R179, and R185. Residues 142-214 (LDVTGRVART…GKTMVVFGTR (73 aa)) enclose the HTH crp-type domain. Residues 174–193 (RQEIGRIVGCSREMVGRVLK) constitute a DNA-binding region (H-T-H motif).

Homodimer.

Its function is as follows. Global cAMP-dependent transcriptional regulator that controls virulence gene expression by distinct cAMP-dependent and -independent mechanisms, which allow to fine tune its virulence program in response to specific host cues or environments. Controls the expression of many regulatory targets including type II, type III and type IV secretion systems, flagellar-mediated motility, and quorum sensing systems. Transcriptional control is exerted by binding to a well-characterized consensus site (5'-ANWWTGNGAWNYAGWTCACAT) within target promoters. Directly binds to the toxA upstream region to regulate exotoxin A production, to the lasR gene promoter to activate the las quorum-sensing system or to the exsA promoter to regulate type III secretion system. Autoregulates as well its own expression. The protein is cAMP-activated global transcriptional regulator Vfr (vfr) of Pseudomonas aeruginosa (strain ATCC 15692 / DSM 22644 / CIP 104116 / JCM 14847 / LMG 12228 / 1C / PRS 101 / PAO1).